A 130-amino-acid polypeptide reads, in one-letter code: Small ribosomal subunit protein uS9 (130 aa).

It belongs to the universal ribosomal protein uS9 family.

This chain is Small ribosomal subunit protein uS9, found in Burkholderia pseudomallei (strain K96243).